Here is a 359-residue protein sequence, read N- to C-terminus: MVAAQAKLVYHLNKYYNEKCQARKAAIAKTIREVCKVVSDVLKEVEVQEPRFISSLNEMDNRYEGLEVISPTEFEVVLYLNQMGVFNFVDDGSLPGCAVLKLSDGRKRSMSLWVEFITASGYLSARKIRSRFQTLVAQAVDKCSYRDVVKMVADTSEVKLRIRDRYVVQITPAFKCTGIWPRSAAHWPLPHIPWPGPNRVAEVKAEGFNLLSKECHTLAGKQSSAESDAWVLQFAEAENRLQLGGCRKKCLSLLKTLRDRHLELPGQPLNNYHMKTLVSYECEKHPRESDWDESCLGDRLNGILLQLISCLQCRRCPHYFLPNLDLFQGKPHSALENAAKQTWRLAREILTNPKSLEKL.

Residues 23-24 and 63-66 contribute to the a ribonucleoside 5'-triphosphate site; these read RK and YEGL. Glutamate 73 and glutamate 75 together coordinate Mg(2+). Residues lysine 248 and 252 to 255 each bind a ribonucleoside 5'-triphosphate; that span reads SLLK.

This sequence belongs to the mab-21 family. As to quaternary structure, monomer. Homodecamer; composed of 2 back to back homopentamers. The protein may exist as monomer in solution and oiligomerizes upon ligand binding.

It localises to the nucleus. Its function is as follows. Putative nucleotidyltransferase required for several aspects of embryonic development including normal development of the eye. It is unclear whether it displays nucleotidyltransferase activity in vivo. Binds single-stranded RNA (ssRNA). This is Putative nucleotidyltransferase MAB21L1 (mab21l1) from Xenopus tropicalis (Western clawed frog).